The following is a 375-amino-acid chain: Glutamate 5-kinase (375 aa).

Lys-17 is a binding site for ATP. Substrate contacts are provided by Ser-57, Asp-144, and Asn-158. An ATP-binding site is contributed by 178-179 (TD). Residues 284–360 (SGSIVVDTGA…NEIADILGYK (77 aa)) enclose the PUA domain.

It belongs to the glutamate 5-kinase family.

It localises to the cytoplasm. The catalysed reaction is L-glutamate + ATP = L-glutamyl 5-phosphate + ADP. Its pathway is amino-acid biosynthesis; L-proline biosynthesis; L-glutamate 5-semialdehyde from L-glutamate: step 1/2. Its function is as follows. Catalyzes the transfer of a phosphate group to glutamate to form L-glutamate 5-phosphate. In Methanococcoides burtonii (strain DSM 6242 / NBRC 107633 / OCM 468 / ACE-M), this protein is Glutamate 5-kinase.